The chain runs to 70 residues: Sec-independent protein translocase protein TatA (70 aa).

A helical transmembrane segment spans residues 1 to 21 (MGSFSIWHWLIVLVVVALLFG). Residues 45–70 (KGESEQAEDETAKPLPKERDKDSARG) form a disordered region.

It belongs to the TatA/E family. In terms of assembly, the Tat system comprises two distinct complexes: a TatABC complex, containing multiple copies of TatA, TatB and TatC subunits, and a separate TatA complex, containing only TatA subunits. Substrates initially bind to the TatABC complex, which probably triggers association of the separate TatA complex to form the active translocon.

It localises to the cell inner membrane. Its function is as follows. Part of the twin-arginine translocation (Tat) system that transports large folded proteins containing a characteristic twin-arginine motif in their signal peptide across membranes. TatA could form the protein-conducting channel of the Tat system. This chain is Sec-independent protein translocase protein TatA, found in Phenylobacterium zucineum (strain HLK1).